A 496-amino-acid chain; its full sequence is NADP-dependent glyceraldehyde-3-phosphate dehydrogenase (496 aa).

Substrate contacts are provided by residues arginine 116 and 169-170; that span reads NY. Residues lysine 192, threonine 195, and aspartate 230 each coordinate NADP(+). 245–249 serves as a coordination point for NAD(+); it reads GGDTG. Glutamate 264 serves as the catalytic Proton acceptor. 297–299 is a substrate binding site; that stretch reads RCT. The active-site Nucleophile is cysteine 298. Residue glutamate 391 participates in NADP(+) binding. Residue arginine 451 participates in substrate binding.

This sequence belongs to the aldehyde dehydrogenase family.

It is found in the cytoplasm. It localises to the cytosol. The catalysed reaction is D-glyceraldehyde 3-phosphate + NADP(+) + H2O = (2R)-3-phosphoglycerate + NADPH + 2 H(+). Competitive inhibition by NADPH, 3-phospho-D-glycerate and ATP. Important as a means of generating NADPH for biosynthetic reactions. May be a main source of cytosolic NADPH for mannitol biosynthesis in leaves. The protein is NADP-dependent glyceraldehyde-3-phosphate dehydrogenase of Apium graveolens (Celery).